A 127-amino-acid chain; its full sequence is Biogenesis of lysosome-related organelles complex 1 subunit BLS1 (127 aa).

The disordered stretch occupies residues 103 to 127 (KNSHNTNHGGCNKTKNSSKDKLLDK). Positions 105 to 117 (SHNTNHGGCNKTK) are enriched in polar residues.

It belongs to the BLOC1S1 family. Component of the biogenesis of lysosome-related organelles complex-1 (BLOC-1).

The protein localises to the endosome. Component of the biogenesis of lysosome-related organelles complex-1 (BLOC-1), a complex involved in endosomal cargo sorting. This chain is Biogenesis of lysosome-related organelles complex 1 subunit BLS1 (BLS1), found in Vanderwaltozyma polyspora (strain ATCC 22028 / DSM 70294 / BCRC 21397 / CBS 2163 / NBRC 10782 / NRRL Y-8283 / UCD 57-17) (Kluyveromyces polysporus).